The following is a 555-amino-acid chain: MSEAEARPTNFIRQIIDEDLASGKHTTIHTRFPPEPNGYLHIGHAKSICLNFGIAQDYQGLCNLRFDDTNPVKEDIEYVDSIKNDVEWLGFHWAGNVCYSSDYFDQLHAYAVELITKGLAYVDELTPDQIREYRGTLKEPGKNSPFRDRSVEENLALFEKMRTGGFEEGKACLRAKIDMASPFIVMRDPVLYRIKFAEHHQTGNKWCIYPMYDFTHCISDALEGITHSLCTLEFQDNRRLYDWVLDNITIPVHPRQYEFSRLNLEYTVMSKRKLNLLVTDKHVEGWDDPRMPTISGLRRRGYTAASIREFCKRIGVTKQDNTIEMASLESCIREDLNENAPRAMAVIDPVKLVIENYPQGESEMVTMPNHPNKPEMGSREVPFSGEIWIDRADFREEANKQYKRLVMGKEVRLRNAYVVKAERVEKDAEGNITTIFCTYDADTLSKDPADGRKVKGVIHWVSAAHALPVEIRLYDRLFSVPNPGAAEDFLSVINPESLVIKQGYAEPSLQNAVAGKAYQFEREGYFCLDSRYTTADKRVFNRTVGLRDTWAKAGE.

A 'HIGH' region motif is present at residues 34-44 (PEPNGYLHIGH). Residues 35 to 37 (EPN) and 41 to 47 (HIGHAKS) each bind ATP. L-glutamine contacts are provided by Asp-67 and Tyr-212. Residues Thr-231, 261-262 (RL), and 269-271 (MSK) each bind ATP. The 'KMSKS' region motif lies at 268–272 (VMSKR). The interval 317–324 (TKQDNTIE) is interaction with tRNA.

Belongs to the class-I aminoacyl-tRNA synthetase family. Monomer.

The protein localises to the cytoplasm. The enzyme catalyses tRNA(Gln) + L-glutamine + ATP = L-glutaminyl-tRNA(Gln) + AMP + diphosphate. The polypeptide is Glutamine--tRNA ligase (Citrobacter koseri (strain ATCC BAA-895 / CDC 4225-83 / SGSC4696)).